The chain runs to 483 residues: MTYIKGNTGKWEYVIGLEIHAQISSKSKLFSGSSTTFAAMPNSQVSYVDAAMPGMLPVLNKHCVHQAIKTGLALKAQINKYSVFDRKNYFYADLPQGYQISQFYYPIVQNGTMKILTSTGDLKTIRINRLHLEQDAGKSIHDQSPHYSFIDLNRAGIGLMEIVTEPDISSPEEAAEFVKKLRSLLRYIGSCDGDMEKGSMRCDANISVRRSGEPLGIRCEIKNINSIRNIIKAIEFEAKRQVDLIESGGIVIQETRLFNADSGETRTIRLKEEAIDYRYFPDPDLLPLIISDELINKLKANLPELPDQKIEKYMKEFGLSKYDAEVIVADESVAEYFEQAANECNPKMLTNWLTSELFGQLNKASIGISKCKITPSNFAKLIKLIENDTISGKIAKTVFEIMFETGKAPDKIVEEKGLVQVSDNNVLNTVIDEVITENPKSVEDYRSGKEKLFSFFVGQIMKKTGGKANPILVNQLLKEKLGS.

It belongs to the GatB/GatE family. GatB subfamily. As to quaternary structure, heterotrimer of A, B and C subunits.

The enzyme catalyses L-glutamyl-tRNA(Gln) + L-glutamine + ATP + H2O = L-glutaminyl-tRNA(Gln) + L-glutamate + ADP + phosphate + H(+). It carries out the reaction L-aspartyl-tRNA(Asn) + L-glutamine + ATP + H2O = L-asparaginyl-tRNA(Asn) + L-glutamate + ADP + phosphate + 2 H(+). Its function is as follows. Allows the formation of correctly charged Asn-tRNA(Asn) or Gln-tRNA(Gln) through the transamidation of misacylated Asp-tRNA(Asn) or Glu-tRNA(Gln) in organisms which lack either or both of asparaginyl-tRNA or glutaminyl-tRNA synthetases. The reaction takes place in the presence of glutamine and ATP through an activated phospho-Asp-tRNA(Asn) or phospho-Glu-tRNA(Gln). This Rickettsia canadensis (strain McKiel) protein is Aspartyl/glutamyl-tRNA(Asn/Gln) amidotransferase subunit B.